Here is a 1241-residue protein sequence, read N- to C-terminus: MVHPIQIGKRTRMSFSKVKEMCPMPNLIEVQLNSYDWFWKEGLNEVFDDVNPIQDYTGNLILEFIDYNLDKDAIKYSVEECKERDATYAAPLKVKVRLLNKETGEVKEQEVFMGDFPLMTQQGTFVINGAERVIVSQLVRSPGAYYGYDVDKTGKKLFSSTVIPNRGAWLEYETDSNDIIYVRIDKTRKLPISILIRALGLGSDAEIVDWFGEEERLKATIEKDNTKTREEALLEIYKRLRPGEPPTVDSALSLINSLFFDAKRYDLSRVGRYKFNKKLAIYIRLLNQVAAEDVVNPFTGEIIVQKGETIDREKALEIQNCAINAVNIQVEDKVIKVIGNNFVDIHKFIDFDISDLKIKEHVHYPTLKNILDNYTDEKSIKEEIKKNIHELIPKHIVVDDIYATISYELGLPYEIGTIDDIDHLGNRRLRSVGELLQNQFRIGLSRMERVVKERMTIQDQEVITPQALINIRPVAAAIKEFFGSSQLSQFMDQTNPLSELTHKRRLSALGPGGLSRERAGFEVRDVHHSHYGRMCPIETPEGPNIGLINSLACYAKVNEYGFIETPYRLVDKKEARVTDEIVYLTADEEDHYLVAQAKEPLDENGCFIDEKITVRDLEDVIVVSKDQVDLMDVSPSQIVSVATAMIPFLENDDASRALMGSNMQRQAVPLLKPAAPIVGTGIEYKAAVDSGVLPKAEHDGVIEYVSSTEVRIRRDSDGGLDKHKLLKYKRSNQGTCINQRPIVSKGEKVKAGDVLADGPSTDFGEIALGQNIRMGFITWEGYNYEDAMLVSEQLVRDDIFTSIHIEEYESEARDTKLGPEEITRDIPNVGEDALKNIDERGIVRIGAEVRSGDILVGKVTPKGETELTAEERLLRAIFGEKAREVRDTSLRVPHGEAGIIVDVKVFTRENGDELPPGVNELVRCYIAQKRKISVGDKMAGRHGNKGVISRILPEEDMPFLPDGRPLQICLNPLGVPSRMNIGQVLEVHLGWAAGEMGWHIATPVFNGAFEDEIVELLQEAGYSEDGKTVLYDGRTGEPFDNRVTVGYMYILKLHHLVDDKIHARSTGPYSLVTQQPLGGKAQFGGQRFGEMEVWALEAYGAAHTLQEVLTVKSDDVVGRVKTYEAIVKGENIPEPGVPESFKVLIKELQALCLDVKVLSDTNEEIKIKESSEEDMEDLGVNIEGTEDEIVPTAEKRSSNQDEEALELVDNEEFEDIKLEYDDLQLDELENGLELEDFNDEH.

A disordered region spans residues 1186–1210 (EDEIVPTAEKRSSNQDEEALELVDN). Positions 1200–1210 (QDEEALELVDN) are enriched in acidic residues.

Belongs to the RNA polymerase beta chain family. The RNAP catalytic core consists of 2 alpha, 1 beta, 1 beta' and 1 omega subunit. When a sigma factor is associated with the core the holoenzyme is formed, which can initiate transcription.

It carries out the reaction RNA(n) + a ribonucleoside 5'-triphosphate = RNA(n+1) + diphosphate. Functionally, DNA-dependent RNA polymerase catalyzes the transcription of DNA into RNA using the four ribonucleoside triphosphates as substrates. This is DNA-directed RNA polymerase subunit beta from Clostridium novyi (strain NT).